Here is a 751-residue protein sequence, read N- to C-terminus: Ecdysteroid-phosphate phosphatase (751 aa).

In terms of domain architecture, UBA spans C16–H60. An SH3 domain is found at A271 to E336. 2 disordered regions span residues G367–S394 and E458–L484. Over residues R466–L479 the composition is skewed to basic and acidic residues. The phosphatase-like stretch occupies residues K490–T751. The active site involves R498. The active-site Tele-phosphohistidine intermediate is the H499. The active site involves H681.

It is found in the cytoplasm. Its subcellular location is the cytosol. The protein localises to the nucleus. It carries out the reaction ecdysone 22-phosphate + H2O = ecdysone + phosphate. The catalysed reaction is 20-hydroxyecdysone 22-phosphate + H2O = 20-hydroxyecdysone + phosphate. It catalyses the reaction 2-deoxyecdysone 22-phosphate + H2O = 2-deoxyecdysone + phosphate. Steroid phosphatase that dephosphorylates ecdysteroids such as ecdysone 22-phosphate (E22P), 3-epi-ecdysone 22-phosphate (E22P) and 3-epi-ecdysone 2-phosphate (E2P). Likely catalyzes the conversion of inactive phosphorylated ecdysteroids into their active forms. Shows high activity towards ecdysone 22-phosphate (E22P), but is also significantly active against 3-epi-ecdysone 22-phosphate (E22P) and 3-epi-ecdysone 2-phosphate (E2P). Also displays acid phosphatase activity towards 4-nitrophenyl phosphate (pNNP) in vitro. Has no activity towards 3-epi-ecdysone 3-phosphate (E3P). This chain is Ecdysteroid-phosphate phosphatase, found in Drosophila melanogaster (Fruit fly).